Here is a 713-residue protein sequence, read N- to C-terminus: MTATLDVPEQNPDLVLDQSADDYWNHYQLTFALYSVSDRAIPSAYDGLKPGQRRLLYQMHDSKLLPGNKPQKSSKVCSAVTGNLHPHGGASMYGAAALMAADFQRVKVIDGQGAFPRIQGDIPAADRYTEMRLSAPGAALTAELNDHAVPMVPTFDGEWVEPTVLPAQWPVLLCNGAVGIAEGWATKVPAHNPREVMAACRALLKTPNMTDDRLCKLIPGPDWGSGASVVGTAGLREYITTGRGHFTVRGTISVEGKNCIITELPPGVASNTVQDRIRALVESGEMSGVADMSDLTDRRNGLRIVVTAKRGHNAEQIRDQLLALTPLESTFAASLVALDENRVPRWWSVRDLIMAFLQLRDSVVLHRSEYRLEKVTARRHLVAGLMKIHLDIDAAVAVIRGSETVDEARKGLQERFKIDAEQADYVLSLQLRRLTKLDVIELQAEAEKLDAEFAELNDLVTNPESRRKVIDKELVETAKLFKGPEYDRRTVLDFDATPVSRGDEDGSRERKVNTAWRLDDRGVFSDSHGELLTSGLGWAVWSDGRIKFTTGNGLPFKIRDIPVAPDITGLVRSGVLPEGYHLALVTRRGKILRVDPASVNPQGVAGNGVAGVKLAADGDEVIAALPVSCANGEAILSIAEKSWKVTEVADIPVKGRGGAGVAFHPFVKGEDALLAASISKTGYVRGKRAVRPENRAKASIKGSGADVTPAPAE.

Positions 41–504 constitute a Topo IIA-type catalytic domain; it reads IPSAYDGLKP…DATPVSRGDE (464 aa). The active-site O-(5'-phospho-DNA)-tyrosine intermediate is the Tyr-128. The interval 694-713 is disordered; the sequence is NRAKASIKGSGADVTPAPAE.

It belongs to the type II topoisomerase GyrA/ParC subunit family. In terms of assembly, a complex of TopoN and TopoM, possibly a heterotetramer. It depends on Mg(2+) as a cofactor.

The catalysed reaction is ATP-dependent breakage, passage and rejoining of double-stranded DNA.. With respect to regulation, inhibited by quinolone antibiotic ciprofloxacin and coumarin antibiotic novobiocin, but at much higher concentrations than is usual for DNA gyrase/topoisomerase. Functionally, catalyzes the relaxation of negatively supercoiled DNA in the presence of ATP or dATP but not other nucleotides. Individual subunits have no activity. Not able to negatively supercoil DNA, it can however introduce positive supercoils in DNA. Relaxes positive supercoils in an ATP-dependent manner. Catenates and decatenates DNA. Generates dsDNA breaks in the presence of the quinolone antibiotic ciprofloxacin, showing it is a topoisomerase. This is Topoisomerase subunit TopoM from Mycolicibacterium smegmatis (strain ATCC 700084 / mc(2)155) (Mycobacterium smegmatis).